We begin with the raw amino-acid sequence, 98 residues long: NADH-ubiquinone oxidoreductase chain 4L (98 aa).

3 helical membrane-spanning segments follow: residues 1–21 (MSMV…GLLM), 29–49 (SLLC…VTIL), and 61–81 (IILL…LVMV).

This sequence belongs to the complex I subunit 4L family. Core subunit of respiratory chain NADH dehydrogenase (Complex I) which is composed of 45 different subunits.

It is found in the mitochondrion inner membrane. It catalyses the reaction a ubiquinone + NADH + 5 H(+)(in) = a ubiquinol + NAD(+) + 4 H(+)(out). Its function is as follows. Core subunit of the mitochondrial membrane respiratory chain NADH dehydrogenase (Complex I) which catalyzes electron transfer from NADH through the respiratory chain, using ubiquinone as an electron acceptor. Part of the enzyme membrane arm which is embedded in the lipid bilayer and involved in proton translocation. The chain is NADH-ubiquinone oxidoreductase chain 4L (MT-ND4L) from Halichoerus grypus (Gray seal).